Here is a 155-residue protein sequence, read N- to C-terminus: Interleukin-2 (155 aa).

Residues 1–20 (MYKMQLLSCIALMLVLVANS) form the signal peptide. O-linked (GalNAc...) threonine glycosylation is present at T24. Cysteines 79 and 127 form a disulfide. N112 carries N-linked (GlcNAc...) asparagine glycosylation.

It belongs to the IL-2 family.

The protein resides in the secreted. Cytokine produced by activated CD4-positive helper T-cells and to a lesser extend activated CD8-positive T-cells and natural killer (NK) cells that plays pivotal roles in the immune response and tolerance. Binds to a receptor complex composed of either the high-affinity trimeric IL-2R (IL2RA/CD25, IL2RB/CD122 and IL2RG/CD132) or the low-affinity dimeric IL-2R (IL2RB and IL2RG). Interaction with the receptor leads to oligomerization and conformation changes in the IL-2R subunits resulting in downstream signaling starting with phosphorylation of JAK1 and JAK3. In turn, JAK1 and JAK3 phosphorylate the receptor to form a docking site leading to the phosphorylation of several substrates including STAT5. This process leads to activation of several pathways including STAT, phosphoinositide-3-kinase/PI3K and mitogen-activated protein kinase/MAPK pathways. Functions as a T-cell growth factor and can increase NK-cell cytolytic activity as well. Promotes strong proliferation of activated B-cells and subsequently immunoglobulin production. Plays a pivotal role in regulating the adaptive immune system by controlling the survival and proliferation of regulatory T-cells, which are required for the maintenance of immune tolerance. Moreover, participates in the differentiation and homeostasis of effector T-cell subsets, including Th1, Th2, Th17 as well as memory CD8-positive T-cells. The polypeptide is Interleukin-2 (IL2) (Vulpes vulpes (Red fox)).